A 103-amino-acid chain; its full sequence is Histone H4 (103 aa).

The span at 1–14 shows a compositional bias: gly residues; sequence MSGRGKGGKGLGKG. Residues 1-20 form a disordered region; it reads MSGRGKGGKGLGKGGAKRHR. Position 2 is an N-acetylserine (Ser-2). Lys-17 is subject to N6-acetyllysine. The DNA-binding element occupies 17-21; sequence KRHRK. An N6-methyllysine modification is found at Lys-21.

This sequence belongs to the histone H4 family. The nucleosome is a histone octamer containing two molecules each of H2A, H2B, H3 and H4 assembled in one H3-H4 heterotetramer and two H2A-H2B heterodimers. The octamer wraps approximately 147 bp of DNA.

It is found in the nucleus. The protein localises to the chromosome. In terms of biological role, core component of nucleosome. Nucleosomes wrap and compact DNA into chromatin, limiting DNA accessibility to the cellular machineries which require DNA as a template. Histones thereby play a central role in transcription regulation, DNA repair, DNA replication and chromosomal stability. DNA accessibility is regulated via a complex set of post-translational modifications of histones, also called histone code, and nucleosome remodeling. This is Histone H4 from Capsicum annuum (Capsicum pepper).